Here is a 122-residue protein sequence, read N- to C-terminus: UPF0145 protein BceJ2315_57450 (122 aa).

It belongs to the UPF0145 family.

This Burkholderia cenocepacia (strain ATCC BAA-245 / DSM 16553 / LMG 16656 / NCTC 13227 / J2315 / CF5610) (Burkholderia cepacia (strain J2315)) protein is UPF0145 protein BceJ2315_57450.